Reading from the N-terminus, the 277-residue chain is N-acetylmuramic acid 6-phosphate etherase (277 aa).

An SIS domain is found at 53–216; the sequence is IIPRVKKGGR…STTIMIELGR (164 aa). The Proton donor role is filled by Glu81. Residue Glu112 is part of the active site.

It belongs to the GCKR-like family. MurNAc-6-P etherase subfamily. Homodimer.

It catalyses the reaction N-acetyl-D-muramate 6-phosphate + H2O = N-acetyl-D-glucosamine 6-phosphate + (R)-lactate. The protein operates within amino-sugar metabolism; N-acetylmuramate degradation. Specifically catalyzes the cleavage of the D-lactyl ether substituent of MurNAc 6-phosphate, producing GlcNAc 6-phosphate and D-lactate. The protein is N-acetylmuramic acid 6-phosphate etherase of Bacteroides thetaiotaomicron (strain ATCC 29148 / DSM 2079 / JCM 5827 / CCUG 10774 / NCTC 10582 / VPI-5482 / E50).